The primary structure comprises 65 residues: Large ribosomal subunit protein bL35 (65 aa).

The segment covering 1–15 (MPKMKTKKSASKRFQ) has biased composition (basic residues). Residues 1–27 (MPKMKTKKSASKRFQVRGSGSIKRGQA) form a disordered region.

The protein belongs to the bacterial ribosomal protein bL35 family.

This is Large ribosomal subunit protein bL35 from Bordetella petrii (strain ATCC BAA-461 / DSM 12804 / CCUG 43448).